The primary structure comprises 85 residues: Neutrophil elastase 2A (85 aa).

Positions 1–85 (IVGGRAAEPH…VAQGVFSFVR (85 aa)) constitute a Peptidase S1 domain. The active-site Charge relay system is the Ser-67.

It belongs to the peptidase S1 family. Elastase subfamily.

May be involved in the degradation of connective tissue in chronic lung disease. The chain is Neutrophil elastase 2A from Equus caballus (Horse).